The primary structure comprises 134 residues: MKRKYRRLFVVIITLSIFAGSVVFVLGKLKNNVSFFYTPTELLSSSLINRPNIRIGGMVVKGTVQKYDDSIVFHITDLKNYIKVVYKGILPPLFSEGSWIVAKGKMVNGKFIASEILAKHDENYMPNKYKTNNL.

Residues 1 to 7 (MKRKYRR) lie on the Cytoplasmic side of the membrane. Residues 8 to 28 (LFVVIITLSIFAGSVVFVLGK) form a helical; Signal-anchor for type II membrane protein membrane-spanning segment. The Periplasmic portion of the chain corresponds to 29 to 134 (LKNNVSFFYT…MPNKYKTNNL (106 aa)). Heme-binding residues include His-120 and Tyr-124.

It belongs to the CcmE/CycJ family.

Its subcellular location is the cell inner membrane. Its function is as follows. Heme chaperone required for the biogenesis of c-type cytochromes. Transiently binds heme delivered by CcmC and transfers the heme to apo-cytochromes in a process facilitated by CcmF and CcmH. In Ehrlichia ruminantium (strain Gardel), this protein is Cytochrome c-type biogenesis protein CcmE.